The sequence spans 1611 residues: MSSFPTRVVALYPYRSSFSDDLEFDPGQVIDVVSNLDGDWYTGTYVDSDGNRKIGSFPKDFTEPAEDAVFVERASEMALHQPTPTSAVHSRNSSLGYAPSITRSIKSISNNTEHLGADTESYLSANDFIDSTSEALTKIVDVDTLSAPFGNDSNSRPHSLKNVEKLHTFSAPYTISEETPSCSTENDSLPLTATHTITGGEDAATGAAVTNTTTTHITTSTNTSTVIPSNPNSVFLVDCTHSQCPTDLPNIATTQHSLRYLDNASASAITVLERTHPAASSTMATESSHQSPSADSQAEELSKSQRVAKDDDPFVVSNTANSDEPASSSKPAKPLTDLNRAFSQRLNLDPQKPGKSQGEISEQEEDEYDDAESDEMHSPYSTHEPESEPEDQDEPSEKDDENKDVEEEQEQEQEEEQIDPEEAKRIALRERMAKMSGGIGMHVFGLPGLAAPIGRKNTLRRTPAKSSEEAKSTTNDSSPPKDSSSTSTQPTEQSNAQQAPSPKEEERPLPSEPSQNQPAEYRDTPDTPRNIMPLPGLMSADQPIKVTEPSNDADKAIVAEGPNNEEETKGPVIPETQETSEQQVHKTPSPEKQKVLSPPPIITNFDKETLASNEAHEAVPQKPSAPQVTRLMAPQDSSSVVTPSPTSLLDPARAVRKVIDGIDPPKEAGAGATADVESAANSPITPPRTWHSPDFTSKSFEPIERKLPSRISEVTEDSIDEDKQNEVDPSTSARALPPPGLRFGKVDTLASLAHDDLDDLPAVPRIFSPPPLPKTPSGEFGDNEFMFPKKSNRVRGHQSRPSTGSQLRNVVPVSIVTSGGRPALPDEMASPSSSIGHPLPSPPPADFNSLNVDFYEPHSYLESPAPEPQPSYEEESFNATVIHAPTPSTATFQGHPTISNVATPPLKQDVTESKASPVADASATHQSSTGLTQEITQLGSNMRLPTKLTRPSNDGRKASGPRPAAPPSIPPPLPVSNILSSPTSEPPKDHPPSAPLSKPVSTSPAAPLARVPPVPKLSSKAPPVPLPSADAPPIPVPSTAPPVPIPTSTPPVPKSSSGAPSAPPPVPAPSSEIPSIPAPSGAPPVPAPSGIPPVPKPSVAAPPVPKPSVAVPPVPAPSGAPPVPKPSVAAPPVPVPSGAPPVPKPSVAAPPVPAPSGAPPVPKPSVAAPPVPAPSSGIPPVPKPAAGVPPVPPPSEAPPVPKPSVGVPPVPPPSTAPPVPTPSAGLPPVPVPTAKAPPVPAPSSEAPSVSTPRSSVPSPHSNASPSPTSSSMASAAPARTSVSRSKSKAERHETSTSSRKSSKSGEHHHHHNEGHADSSSTRTSLAHQDSRKSLHRHLSRSSSRASKKPSIVSTTGPFNESFSAKPVEPCASEKWWLNSTAVPKSVVQMNDSVLYMIKEGITGQDKKYKSVHILFPDYSQTVLTATFNPHNQNITQLSQLQLAPPAQPSKARLDEEYACYGSTILKKARAYQGSMVGDGSAFTFVNSVMSILAHNLEPINKQTFGGVIYKNVGNVTVQQIGEIRPGDIVTFDKAKFSGQKGTLRSKYSLEVGKPMHYGIISEWDVSKLKIRVLEQGRESKKVSVASYKFGDLKSGEVTVWRVMRRSWLGWN.

The 65-residue stretch at 3–67 (SFPTRVVALY…PKDFTEPAED (65 aa)) folds into the SH3 domain. Disordered stretches follow at residues 275-648 (THPA…PTSL), 662-741 (IDPP…PPGL), 762-851 (AVPR…NSLN), and 886-1365 (TPST…FSAK). Positions 278–296 (AASSTMATESSHQSPSADS) are enriched in polar residues. Positions 300–312 (ELSKSQRVAKDDD) are enriched in basic and acidic residues. Polar residues predominate over residues 316–330 (VSNTANSDEPASSSK). Acidic residues-rich tracts occupy residues 361 to 373 (SEQEEDEYDDAES) and 387 to 420 (SEPEDQDEPSEKDDENKDVEEEQEQEQEEEQIDP). Basic and acidic residues predominate over residues 421-433 (EEAKRIALRERMA). Low complexity predominate over residues 472-494 (STTNDSSPPKDSSSTSTQPTEQS). Residues 576–586 (TQETSEQQVHK) show a composition bias toward polar residues. Over residues 605 to 619 (FDKETLASNEAHEAV) the composition is skewed to basic and acidic residues. Residues 637–648 (SSSVVTPSPTSL) show a composition bias toward low complexity. Composition is skewed to polar residues over residues 799–808 (SRPSTGSQLR), 886–902 (TPSTATFQGHPTISNVA), and 923–940 (ATHQSSTGLTQEITQLGS). Composition is skewed to pro residues over residues 963–974 (PAAPPSIPPPLP), 1022–1053 (PPVPLPSADAPPIPVPSTAPPVPIPTSTPPVP), and 1076–1241 (IPAP…PVPA). Positions 1242–1278 (PSSEAPSVSTPRSSVPSPHSNASPSPTSSSMASAAPA) are enriched in low complexity. A phosphoserine mark is found at Ser1258, Ser1261, and Ser1266. The span at 1300–1312 (KSSKSGEHHHHHN) shows a compositional bias: basic residues. Positions 1317 to 1327 (DSSSTRTSLAH) are enriched in polar residues. Low complexity predominate over residues 1340–1350 (RSSSRASKKPS). Residues 1351–1362 (IVSTTGPFNESF) are compositionally biased toward polar residues. Position 1379 is a phosphoserine (Ser1379). At Thr1380 the chain carries Phosphothreonine.

The protein localises to the cytoplasm. This is SH3 domain-containing protein C23A1.17 from Schizosaccharomyces pombe (strain 972 / ATCC 24843) (Fission yeast).